A 429-amino-acid polypeptide reads, in one-letter code: Glutamate-1-semialdehyde 2,1-aminomutase 2 (429 aa).

Lys-268 carries the N6-(pyridoxal phosphate)lysine modification.

It belongs to the class-III pyridoxal-phosphate-dependent aminotransferase family. HemL subfamily. Homodimer. Requires pyridoxal 5'-phosphate as cofactor.

It localises to the cytoplasm. It carries out the reaction (S)-4-amino-5-oxopentanoate = 5-aminolevulinate. The protein operates within porphyrin-containing compound metabolism; protoporphyrin-IX biosynthesis; 5-aminolevulinate from L-glutamyl-tRNA(Glu): step 2/2. The protein is Glutamate-1-semialdehyde 2,1-aminomutase 2 of Bacillus cereus (strain B4264).